The primary structure comprises 149 residues: Heat shock protein beta-3 (149 aa).

Residues 47–149 (KARAAQAPPV…VEVKDSAGTK (103 aa)) enclose the sHSP domain.

Belongs to the small heat shock protein (HSP20) family.

Its subcellular location is the cytoplasm. It is found in the nucleus. Functionally, inhibitor of actin polymerization. This Bos taurus (Bovine) protein is Heat shock protein beta-3 (HSPB3).